Reading from the N-terminus, the 218-residue chain is MNAPSRPHLPRGPYLLCDDSVLPEISLVDKAARLVAGGARLVQLRMKRTPIREALAATRQVVALCRREGALCLVNDRVDLALLADADGVHVGDEDVPAEDARALLGPGRLVGVTVRDVVGARAAQAAGADYVGLGPVFPTSTKQVPAPVLGLEAFASVVRDSPLPVVGIGGVGLVNIASVAAAGAHCAAVVSDALLAADITERVRRLVEAFEQGRFGA.

4-amino-2-methyl-5-(diphosphooxymethyl)pyrimidine-binding positions include 43 to 47 (QLRMK) and Asn75. 2 residues coordinate Mg(2+): Asp76 and Asp95. Thr114 lines the 4-amino-2-methyl-5-(diphosphooxymethyl)pyrimidine pocket. 140-142 (TST) provides a ligand contact to 2-[(2R,5Z)-2-carboxy-4-methylthiazol-5(2H)-ylidene]ethyl phosphate. Lys143 is a 4-amino-2-methyl-5-(diphosphooxymethyl)pyrimidine binding site. 2-[(2R,5Z)-2-carboxy-4-methylthiazol-5(2H)-ylidene]ethyl phosphate contacts are provided by residues Gly171 and 191-192 (VS).

This sequence belongs to the thiamine-phosphate synthase family. Mg(2+) serves as cofactor.

It catalyses the reaction 2-[(2R,5Z)-2-carboxy-4-methylthiazol-5(2H)-ylidene]ethyl phosphate + 4-amino-2-methyl-5-(diphosphooxymethyl)pyrimidine + 2 H(+) = thiamine phosphate + CO2 + diphosphate. The enzyme catalyses 2-(2-carboxy-4-methylthiazol-5-yl)ethyl phosphate + 4-amino-2-methyl-5-(diphosphooxymethyl)pyrimidine + 2 H(+) = thiamine phosphate + CO2 + diphosphate. The catalysed reaction is 4-methyl-5-(2-phosphooxyethyl)-thiazole + 4-amino-2-methyl-5-(diphosphooxymethyl)pyrimidine + H(+) = thiamine phosphate + diphosphate. The protein operates within cofactor biosynthesis; thiamine diphosphate biosynthesis; thiamine phosphate from 4-amino-2-methyl-5-diphosphomethylpyrimidine and 4-methyl-5-(2-phosphoethyl)-thiazole: step 1/1. In terms of biological role, condenses 4-methyl-5-(beta-hydroxyethyl)thiazole monophosphate (THZ-P) and 2-methyl-4-amino-5-hydroxymethyl pyrimidine pyrophosphate (HMP-PP) to form thiamine monophosphate (TMP). In Myxococcus xanthus (strain DK1622), this protein is Thiamine-phosphate synthase.